The primary structure comprises 454 residues: Toxin CfTX-A (454 aa).

An N-terminal signal peptide occupies residues 1 to 18 (MDYAFIVFLVCFVSGTLG). Positions 19–25 (NRRRAKR) are excised as a propeptide. Positions 27 to 61 (VDEVTSGINQLVNQLNNVQQDTAAIKSALEELKTE) form a coiled coil.

Belongs to the jellyfish toxin family. Type II subfamily. Oligomer. Post-translationally, contains 2 disulfide bonds. In terms of tissue distribution, nematocytes.

The protein resides in the secreted. It is found in the nematocyst. Its subcellular location is the target cell membrane. In terms of biological role, the fraction containing this toxin and CfTX-A shows potent hemolytic activity. This fraction causes minor effects on the cardiovascular system of anesthetized rats (at 25 ug/kg), since it has no significant effects on heart rate but produces relatively small increases in mean arterial pressure. This Chironex fleckeri (Australian box jellyfish) protein is Toxin CfTX-A.